We begin with the raw amino-acid sequence, 390 residues long: Telobox protein 1 (390 aa).

Residues 30 to 57 (ENPSKREVAQDVPGFERKPTKVRKPRVK) form a disordered region. Basic and acidic residues predominate over residues 32 to 48 (PSKREVAQDVPGFERKP). 2 consecutive HTH myb-type domains span residues 50–109 (KVRK…PEDY) and 135–193 (STRK…PERY). The H-T-H motif DNA-binding region spans 78 to 105 (WKKILLDERFHFTNRSPNDLKDRFRTIL). Residues 115–143 (NAKTHMGRPQKIPHTVGLSKSTRKERKQF) form a disordered region. A DNA-binding region (H-T-H motif) is located at residues 162 to 189 (WTRISKDANLGLQNRRSTDLRDRFRNAF). Composition is skewed to polar residues over residues 244–257 (SNPNASPQQTTEQP) and 322–340 (ISPSTSQNSVQPFPFSIQQ). Disordered regions lie at residues 244–278 (SNPNASPQQTTEQPASDELLDWPHHNLPSQFFTSQ) and 316–390 (QPPS…DNRG). The segment covering 347-360 (PPLSSNTLNSSTLP) has biased composition (low complexity).

The protein localises to the nucleus. Functionally, general transcription factor with prominent roles in controlling histone levels and stability. Binds and regulates the activities of many promoters, including those controlling the expression of all four types of canonical histones. Is also involved in the centromeric loading of cnp1 and maintenance of centromere identity. Moreover, regulates the expression of cdc2, a protease capable of histone clipping. This Schizosaccharomyces pombe (strain 972 / ATCC 24843) (Fission yeast) protein is Telobox protein 1.